The primary structure comprises 169 residues: Secreted RxLR effector protein BLN03 (169 aa).

A signal peptide spans 1-21 (MRPRKYIVVVLLSIAYTMCLA). A dEER motif is present at residues 51-54 (TEER). A helical transmembrane segment spans residues 149–169 (GSAFLFVIGFIVLLAFAMTAV).

This sequence belongs to the RxLR effector family. Interacts with host transcription factor NAC069.

Its subcellular location is the secreted. The protein localises to the host membrane. Functionally, secreted effector that inhibits stress-induced relocalization of the endoplasmic reticulum tail-anchored transcription factors to the nucleus, thus affecting stress responses. The polypeptide is Secreted RxLR effector protein BLN03 (Bremia lactucae (Lettuce downy mildew)).